A 585-amino-acid chain; its full sequence is MITRLSHLFLRTLRDDPADAEVPSHKLLVRAGYVRRVAPGVYSWLPLGLRVLRKVEDVVRAEMNAIGGQEISLPALLPRDPYETTNRWTEYGDSLFRLHDRKGADYLLGPTHEELFALTVKGEYNSYKDLPVTLYQIQTKYRDEERPRAGILRGREFVMKDSYSFDLDEDGLKASYNAHREAYQRIFDRLGVKYVIVAATSGAMGGSASEEFLADSPVGEDTYVICRESGYAANVEAVVTPAPEPQPIEGRPAAVVHDTPDTPTIASLVEWANAAGIAEQFGRPVTAADTLKNVMVKLRHPDGKTEIVGIGVPGDREVDDKRLGASVEPAEVELLTDADFAANPFLVKGYIGPKALQENGIRYLVDPRVGTGTAWITGADSPGKHVVGLIAGRDFTPDGTIEAAEVRDGDPSPDGRGTLEAARGIEIGHIFQLGYKYTDAFEVDVLGENGKPVRLIMGSYGIGVSRMVAVIAEQQHDEKGLRWPAAVAPFDVHVVVANKDEAARTGAEQVVAGLDAQGLDVLFDDRTASPGVKFKDAELLGMPWVVVIGRGWADGTVELRNRFTGEAENVPAAEAVATVVARIRG.

It belongs to the class-II aminoacyl-tRNA synthetase family. ProS type 1 subfamily. As to quaternary structure, homodimer.

It localises to the cytoplasm. It catalyses the reaction tRNA(Pro) + L-proline + ATP = L-prolyl-tRNA(Pro) + AMP + diphosphate. In terms of biological role, catalyzes the attachment of proline to tRNA(Pro) in a two-step reaction: proline is first activated by ATP to form Pro-AMP and then transferred to the acceptor end of tRNA(Pro). As ProRS can inadvertently accommodate and process non-cognate amino acids such as alanine and cysteine, to avoid such errors it has two additional distinct editing activities against alanine. One activity is designated as 'pretransfer' editing and involves the tRNA(Pro)-independent hydrolysis of activated Ala-AMP. The other activity is designated 'posttransfer' editing and involves deacylation of mischarged Ala-tRNA(Pro). The misacylated Cys-tRNA(Pro) is not edited by ProRS. In Nocardia farcinica (strain IFM 10152), this protein is Proline--tRNA ligase.